Consider the following 90-residue polypeptide: Acylphosphatase (90 aa).

Residues 4–90 (RMYVKVYGIV…KGEFNNFDTY (87 aa)) form the Acylphosphatase-like domain. Catalysis depends on residues R19 and N37.

This sequence belongs to the acylphosphatase family.

The catalysed reaction is an acyl phosphate + H2O = a carboxylate + phosphate + H(+). The protein is Acylphosphatase (acyP) of Sulfurisphaera tokodaii (strain DSM 16993 / JCM 10545 / NBRC 100140 / 7) (Sulfolobus tokodaii).